The sequence spans 230 residues: Large ribosomal subunit protein uL1 (230 aa).

It belongs to the universal ribosomal protein uL1 family. As to quaternary structure, part of the 50S ribosomal subunit.

Binds directly to 23S rRNA. The L1 stalk is quite mobile in the ribosome, and is involved in E site tRNA release. Functionally, protein L1 is also a translational repressor protein, it controls the translation of the L11 operon by binding to its mRNA. The polypeptide is Large ribosomal subunit protein uL1 (Staphylococcus aureus (strain N315)).